Here is a 148-residue protein sequence, read N- to C-terminus: Ribonuclease pancreatic (148 aa).

A signal peptide spans 1 to 25 (MGLEKSLILLPLLVLVFGWVQSSLG). Substrate-binding residues include K32 and R35. H36 (proton acceptor) is an active-site residue. 4 disulfides stabilise this stretch: C50–C108, C64–C119, C82–C134, and C89–C96. N58 carries an N-linked (GlcNAc...) asparagine glycan. 65–69 (KPVNT) serves as a coordination point for substrate. The N-linked (GlcNAc...) asparagine glycan is linked to N86. K90 and R109 together coordinate substrate. Residue H143 is the Proton donor of the active site.

Belongs to the pancreatic ribonuclease family. Monomer. Interacts with and forms tight 1:1 complexes with RNH1. Dimerization of two such complexes may occur. Interaction with RNH1 inhibits this protein. As to expression, pancreas.

The protein localises to the secreted. The enzyme catalyses an [RNA] containing cytidine + H2O = an [RNA]-3'-cytidine-3'-phosphate + a 5'-hydroxy-ribonucleotide-3'-[RNA].. The catalysed reaction is an [RNA] containing uridine + H2O = an [RNA]-3'-uridine-3'-phosphate + a 5'-hydroxy-ribonucleotide-3'-[RNA].. Functionally, endonuclease that catalyzes the cleavage of RNA on the 3' side of pyrimidine nucleotides. Acts on single-stranded and double-stranded RNA. This Chionomys nivalis (European snow vole) protein is Ribonuclease pancreatic (RNASE1).